Here is a 496-residue protein sequence, read N- to C-terminus: Probable cytosol aminopeptidase (496 aa).

Mn(2+)-binding residues include lysine 261 and aspartate 266. The active site involves lysine 273. Positions 284, 343, and 345 each coordinate Mn(2+). Arginine 347 is an active-site residue.

The protein belongs to the peptidase M17 family. Mn(2+) is required as a cofactor.

The protein localises to the cytoplasm. The enzyme catalyses Release of an N-terminal amino acid, Xaa-|-Yaa-, in which Xaa is preferably Leu, but may be other amino acids including Pro although not Arg or Lys, and Yaa may be Pro. Amino acid amides and methyl esters are also readily hydrolyzed, but rates on arylamides are exceedingly low.. It carries out the reaction Release of an N-terminal amino acid, preferentially leucine, but not glutamic or aspartic acids.. In terms of biological role, presumably involved in the processing and regular turnover of intracellular proteins. Catalyzes the removal of unsubstituted N-terminal amino acids from various peptides. This Bacillus licheniformis (strain ATCC 14580 / DSM 13 / JCM 2505 / CCUG 7422 / NBRC 12200 / NCIMB 9375 / NCTC 10341 / NRRL NRS-1264 / Gibson 46) protein is Probable cytosol aminopeptidase.